A 430-amino-acid chain; its full sequence is Serine hydroxymethyltransferase (430 aa).

Residues Leu-123 and 127–129 (GHL) each bind (6S)-5,6,7,8-tetrahydrofolate. At Lys-232 the chain carries N6-(pyridoxal phosphate)lysine. Glu-248 contacts (6S)-5,6,7,8-tetrahydrofolate.

The protein belongs to the SHMT family. As to quaternary structure, homodimer. Pyridoxal 5'-phosphate is required as a cofactor.

It localises to the cytoplasm. It carries out the reaction (6R)-5,10-methylene-5,6,7,8-tetrahydrofolate + glycine + H2O = (6S)-5,6,7,8-tetrahydrofolate + L-serine. It functions in the pathway one-carbon metabolism; tetrahydrofolate interconversion. Its pathway is amino-acid biosynthesis; glycine biosynthesis; glycine from L-serine: step 1/1. Its function is as follows. Catalyzes the reversible interconversion of serine and glycine with tetrahydrofolate (THF) serving as the one-carbon carrier. This reaction serves as the major source of one-carbon groups required for the biosynthesis of purines, thymidylate, methionine, and other important biomolecules. Also exhibits THF-independent aldolase activity toward beta-hydroxyamino acids, producing glycine and aldehydes, via a retro-aldol mechanism. This Anaplasma marginale (strain Florida) protein is Serine hydroxymethyltransferase.